Consider the following 169-residue polypeptide: Peptide methionine sulfoxide reductase MsrA (169 aa).

Cysteine 10 is a catalytic residue.

The protein belongs to the MsrA Met sulfoxide reductase family.

It carries out the reaction L-methionyl-[protein] + [thioredoxin]-disulfide + H2O = L-methionyl-(S)-S-oxide-[protein] + [thioredoxin]-dithiol. The catalysed reaction is [thioredoxin]-disulfide + L-methionine + H2O = L-methionine (S)-S-oxide + [thioredoxin]-dithiol. In terms of biological role, has an important function as a repair enzyme for proteins that have been inactivated by oxidation. Catalyzes the reversible oxidation-reduction of methionine sulfoxide in proteins to methionine. This chain is Peptide methionine sulfoxide reductase MsrA, found in Streptococcus pyogenes serotype M6 (strain ATCC BAA-946 / MGAS10394).